Consider the following 424-residue polypeptide: Inhibin beta A chain (424 aa).

The N-terminal stretch at 1 to 20 (MPLLWLRGFLLASCWIIVRS) is a signal peptide. Positions 21–308 (SPTPGSGGHS…EEHPHRRRRR (288 aa)) are excised as a propeptide. N-linked (GlcNAc...) asparagine glycosylation is present at Asn-165. 2 disordered regions span residues 178–197 (QQRR…DVGF) and 259–306 (KKKK…HRRR). Acidic residues predominate over residues 188 to 197 (AGEEAEDVGF). Residues 263–275 (KEEEAEGRKRDGE) are compositionally biased toward basic and acidic residues. 4 disulfide bridges follow: Cys-312–Cys-320, Cys-319–Cys-389, Cys-348–Cys-421, and Cys-352–Cys-423.

The protein belongs to the TGF-beta family. In terms of assembly, dimeric, linked by one or more disulfide bonds. Inhibin A is a dimer of alpha/INHA and beta-A/INHBA. Activin A is a homodimer of beta-A/INHBA. Activin AB is a dimer of beta-A/INHBA and beta-B/INHBB. Interacts with FST and FSTL3; these interactions prevent activin A interaction to its type II receptor. Activin A interacts with ACVR2A. Activin A interacts with BMPR2. Inhibin A interacts with ACVR1; this interaction creates a non-signaling complex (NSC) that inhibits ACVR1-mediated BMP signaling. Inhibin A interacts with ACVR2A.

It is found in the secreted. Its function is as follows. Inhibins/activins are involved in regulating a number of diverse functions such as hypothalamic and pituitary hormone secretion, gonadal hormone secretion, germ cell development and maturation, erythroid differentiation, insulin secretion, nerve cell survival, embryonic axial development or bone growth, depending on their subunit composition. Activin A is a homodimer of INHBA that plays a role in several essential biological processes including embryonic development, stem cell maintenance and differentiation, haematopoiesis, cell proliferation and tissue fibrosis. Signals through type I (such as ACVR1B or ACVR1C) and type II receptors (such as ACVR2A, ACVR2B or BMPR2) which, upon ligand binding, phosphorylate SMAD2 and SMAD3 intracellular signaling mediators that form a complex with SMAD4, translocate to the nucleus and modulate gene expression. Can also activate alternative non-canonical intracellular signaling pathways including the p38 MAPK, extracellular signal-regulated kinases 1/2 (ERK1/2) and c-Jun N-terminal kinases (JNKs) to modulate cell migration and differentiation. Alternatively, promotes osteoblastic differentiation via ACVRL1-SMAD1/5/9 pathway. In addition, can engage the type I receptor ACVR1 to form an ACVR1-activin A-type II receptor non-signaling complex (NSC) that renders receptors unavailable for engagement with BMPs, hence resulting in an apparent inhibition of ACVR1-mediated BMP signaling. In terms of biological role, inhibin A is a dimer of alpha/INHA and beta-A/INHBA that functions as a feedback regulator in the hypothalamic-pituitary-gonadal (HPG) axis. Inhibits the secretion of FSH from the anterior pituitary gland by acting on pituitary gonadotrope cells. Antagonizes activin A by binding to the proteoglycan, betaglycan, and forming a stable complex with and, thereby, sequestering type II activin receptors while excluding type I receptor. In Sus scrofa (Pig), this protein is Inhibin beta A chain (INHBA).